The following is a 314-amino-acid chain: Aspartate carbamoyltransferase catalytic subunit (314 aa).

Carbamoyl phosphate-binding residues include Arg58 and Thr59. Residue Lys86 participates in L-aspartate binding. Residues Arg108, His136, and Gln139 each coordinate carbamoyl phosphate. The L-aspartate site is built by Arg169 and Arg223. Carbamoyl phosphate-binding residues include Gly264 and Pro265.

It belongs to the aspartate/ornithine carbamoyltransferase superfamily. ATCase family. In terms of assembly, heterododecamer (2C3:3R2) of six catalytic PyrB chains organized as two trimers (C3), and six regulatory PyrI chains organized as three dimers (R2).

The catalysed reaction is carbamoyl phosphate + L-aspartate = N-carbamoyl-L-aspartate + phosphate + H(+). The protein operates within pyrimidine metabolism; UMP biosynthesis via de novo pathway; (S)-dihydroorotate from bicarbonate: step 2/3. Its function is as follows. Catalyzes the condensation of carbamoyl phosphate and aspartate to form carbamoyl aspartate and inorganic phosphate, the committed step in the de novo pyrimidine nucleotide biosynthesis pathway. The sequence is that of Aspartate carbamoyltransferase catalytic subunit from Jannaschia sp. (strain CCS1).